The sequence spans 158 residues: Ethylene-responsive transcription factor ERF120 (158 aa).

The AP2/ERF DNA-binding region spans lysine 86 to glutamate 147. Residues valine 134–asparagine 158 are disordered. The segment covering lysine 144–asparagine 158 has biased composition (basic and acidic residues).

This sequence belongs to the AP2/ERF transcription factor family. ERF subfamily.

It is found in the nucleus. In terms of biological role, probably acts as a transcriptional activator. Binds to the GCC-box pathogenesis-related promoter element. May be involved in the regulation of gene expression by stress factors and by components of stress signal transduction pathways. The protein is Ethylene-responsive transcription factor ERF120 (ERF120) of Arabidopsis thaliana (Mouse-ear cress).